Here is a 154-residue protein sequence, read N- to C-terminus: Low molecular weight protein-tyrosine-phosphatase PtpA (154 aa).

The active-site Nucleophile is Cys-8. Residue Arg-14 is part of the active site. Residue Asp-120 is the Proton donor of the active site.

Belongs to the low molecular weight phosphotyrosine protein phosphatase family.

It carries out the reaction O-phospho-L-tyrosyl-[protein] + H2O = L-tyrosyl-[protein] + phosphate. Its function is as follows. Dephosphorylates the phosphotyrosine-containing proteins. In Staphylococcus saprophyticus subsp. saprophyticus (strain ATCC 15305 / DSM 20229 / NCIMB 8711 / NCTC 7292 / S-41), this protein is Low molecular weight protein-tyrosine-phosphatase PtpA (ptpA).